A 567-amino-acid polypeptide reads, in one-letter code: Hydrogenase-2 large chain (567 aa).

Residues Cys61, Cys64, Cys546, and Cys549 each coordinate Ni(2+). The propeptide occupies 553 to 567 (VVDADGNEVVSVKVL).

Belongs to the [NiFe]/[NiFeSe] hydrogenase large subunit family. As to quaternary structure, heterodimer of a large and a small subunit. The cofactor is Ni(2+).

The protein localises to the cell membrane. It carries out the reaction H2 + A = AH2. In terms of biological role, this is one of three E.coli hydrogenases synthesized in response to different physiological conditions. HYD2 is involved in hydrogen uptake. The polypeptide is Hydrogenase-2 large chain (hybC) (Escherichia coli O157:H7).